Here is a 676-residue protein sequence, read N- to C-terminus: XK-related protein 5 (676 aa).

Helical transmembrane passes span 37–57 (WLAL…FLWF), 114–134 (LLEA…VFLA), 140–160 (IVPG…LVSY), 206–226 (VWVL…LVAQ), 239–259 (LFNL…WDSP), 266–286 (SFYL…TDFL), and 294–314 (LWTV…LVIY). Disordered regions lie at residues 336–362 (PIED…DSSS), 372–391 (TSLD…GLGE), 495–538 (LEDN…KEGQ), and 598–661 (PIPG…IQRD). The segment covering 498 to 509 (NATTQKPPATQE) has biased composition (polar residues).

This sequence belongs to the XK family.

It localises to the cell membrane. The sequence is that of XK-related protein 5 from Mus musculus (Mouse).